The sequence spans 917 residues: Nitrate reductase [NADH] 1 (917 aa).

Positions 62–81 (DSYDDSSSDDEDESHNRNVP) are disordered. The span at 63 to 74 (SYDDSSSDDEDE) shows a compositional bias: acidic residues. Residue cysteine 197 participates in Mo-molybdopterin binding. Residues 545-620 (SKMYSISEVR…LEDYRIGELI (76 aa)) form the Cytochrome b5 heme-binding domain. Histidine 580 and histidine 603 together coordinate heme. One can recognise an FAD-binding FR-type domain in the interval 660–772 (REKIPVRLIE…KGPLGHIEYK (113 aa)). FAD contacts are provided by residues 712–715 (RAYT), 729–733 (VVKVY), phenylalanine 734, phenylalanine 741, 746–748 (LMS), and threonine 799.

This sequence belongs to the nitrate reductase family. In terms of assembly, homodimer. Requires FAD as cofactor. Heme serves as cofactor. It depends on Mo-molybdopterin as a cofactor. Root, leaf, and shoot.

It carries out the reaction nitrite + NAD(+) + H2O = nitrate + NADH + H(+). Its function is as follows. Nitrate reductase is a key enzyme involved in the first step of nitrate assimilation in plants, fungi and bacteria. This Arabidopsis thaliana (Mouse-ear cress) protein is Nitrate reductase [NADH] 1 (NIA1).